The chain runs to 440 residues: MTDGLPERFDVLVHPVSELRGELRAQPSKNYTTRYLLAAALAEGETRVVGAATSEDAEALIRCLRAWGADVDRVGEDVVVRGFGAHPRAGMTLNPGNAGAVARFLMGVAALTTDTTFVTDYSESLGRRPQGDLLAALERLGARVSSRNGQLPVTLSGPVRGGRVEVSAQRSSQYASALMFLGPLLPDGLDLRLTGEIKSHAPLRQTLDTLAAFGLQARASADLTRITIPGGQAYRPGRVLVPGDYPGSAALLVAAALLPGEVTVTNLREGDLQGEREALNVLRAMGADLVREGDRVTVRGGRPLHAVTRDGDSFTDAVQALTAAAAFARGTTTWENVATLRLKECDRISDTRRELERLGLTATETADSLSITGADRIPGDLTADGHGDHRMIMLLTLLGLRAEAPLRITGAHHIRKSYPLFFRHLEELGAHFEYLPTDAA.

K29 and R34 together coordinate 3-phosphoshikimate. K29 is a binding site for phosphoenolpyruvate. Residues G99 and R128 each coordinate phosphoenolpyruvate. Residues S171, S172, Q173, S199, D316, and K343 each contribute to the 3-phosphoshikimate site. Residue Q173 participates in phosphoenolpyruvate binding. The active-site Proton acceptor is D316. R347, R390, and K416 together coordinate phosphoenolpyruvate.

It belongs to the EPSP synthase family. As to quaternary structure, monomer.

The protein localises to the cytoplasm. It carries out the reaction 3-phosphoshikimate + phosphoenolpyruvate = 5-O-(1-carboxyvinyl)-3-phosphoshikimate + phosphate. It functions in the pathway metabolic intermediate biosynthesis; chorismate biosynthesis; chorismate from D-erythrose 4-phosphate and phosphoenolpyruvate: step 6/7. Its function is as follows. Catalyzes the transfer of the enolpyruvyl moiety of phosphoenolpyruvate (PEP) to the 5-hydroxyl of shikimate-3-phosphate (S3P) to produce enolpyruvyl shikimate-3-phosphate and inorganic phosphate. This is 3-phosphoshikimate 1-carboxyvinyltransferase from Deinococcus geothermalis (strain DSM 11300 / CIP 105573 / AG-3a).